Reading from the N-terminus, the 207-residue chain is Small ribosomal subunit protein uS10m (207 aa).

The N-terminal 24 residues, 1 to 24 (MLSVFGLRTVARCNSTLASGGARA), are a transit peptide targeting the mitochondrion.

It belongs to the universal ribosomal protein uS10 family. In terms of assembly, part of the mitochondrial small ribosomal subunit.

The protein localises to the mitochondrion. Involved in mitochondrial genome encoded proteins translation. Involved in the binding of tRNA to the ribosomes. The polypeptide is Small ribosomal subunit protein uS10m (RSM10) (Eremothecium gossypii (strain ATCC 10895 / CBS 109.51 / FGSC 9923 / NRRL Y-1056) (Yeast)).